We begin with the raw amino-acid sequence, 508 residues long: Protein phosphatase PP2A regulatory subunit B (508 aa).

6 WD repeats span residues 19 to 58, 81 to 122, 166 to 204, 215 to 255, 274 to 312, and 329 to 370; these read TEAD…KKQS, EIEE…IKLV, AHAY…QSFN, ELTE…LCDS, EITS…KPIK, and ENDA…GNDD. Residues 369 to 466 form a disordered region; that stretch reads DDKPKFKSAF…MRRRMTSGVG (98 aa). Positions 396–418 are enriched in acidic residues; that stretch reads DDDDDDDDDDDDEEADDEFDEEV. The segment covering 447–461 has biased composition (basic residues); it reads FKSKKSGQHPMRRRM. One copy of the WD 7 repeat lies at 477-507; it reads DFKKSILHLSWHPRENSVAIAATNNLYIFST.

The protein belongs to the phosphatase 2A regulatory subunit B family. As to quaternary structure, PP2A exists in several trimeric forms, all of which consist of a core composed of a catalytic subunit associated with a 65 kDa (PR65) (Subunit A) and a 55 kDa (PR55) (Subunit B) regulatory subunit.

In terms of biological role, phosphatase 2A affects a variety of biological processes in the cell such as transcription, cell cycle progression and cellular morphogenesis, and provides an initial identification of critical substrates for this phosphatase. The regulatory subunit may direct the catalytic subunit to distinct, albeit overlapping, subsets of substrates. This chain is Protein phosphatase PP2A regulatory subunit B (CDC55), found in Candida tropicalis (Yeast).